Reading from the N-terminus, the 118-residue chain is UPF0342 protein ABC1519 (118 aa).

It belongs to the UPF0342 family.

The protein is UPF0342 protein ABC1519 of Shouchella clausii (strain KSM-K16) (Alkalihalobacillus clausii).